Here is a 90-residue protein sequence, read N- to C-terminus: Probable Fe(2+)-trafficking protein (90 aa).

It belongs to the Fe(2+)-trafficking protein family.

Functionally, could be a mediator in iron transactions between iron acquisition and iron-requiring processes, such as synthesis and/or repair of Fe-S clusters in biosynthetic enzymes. This chain is Probable Fe(2+)-trafficking protein, found in Pseudoalteromonas translucida (strain TAC 125).